Consider the following 426-residue polypeptide: Putative competence-damage inducible protein (426 aa).

This sequence belongs to the CinA family.

In Symbiobacterium thermophilum (strain DSM 24528 / JCM 14929 / IAM 14863 / T), this protein is Putative competence-damage inducible protein.